The primary structure comprises 1034 residues: MERARRLAMLGRLVSQTKHNPSISSSALCSPSRYVSSLSPYVCSGTNVRSDRNLNGFGSQVRTISVEALKPSDTFPRRHNSATPEEQTKMAEFVGFSNLDSLIDATVPKAIRLDSMKYSKFDEGLTESQMIAHMQDLASKNKIFKSFIGMGYYNTSVPTVILRNIMENPGWYTQYTPYQAEIAQGRLESLLNFQTMITDLTGLPMSNASLLDEGTAAAEAMAMCNNIQKGKKKTFIIASNCHPQTIDICKTRADGFDLKVVTSDLKDFDYSSGDVCGVLVQYPGTEGELLDYSEFIKNAHANGVKVVMASDLLALTILKPPGELGADIVVGSAQRFGVPMGYGGPHAAFLATSQEYKRMMPGRIIGVSVDSSGKPALRMAMQTREQHIRRDKATSNICTAQALLANMAAMYGVYHGPEGLKTIAKRVHGLAGTFAAGLKKLGTVQVQDLPFFDTVKVTCADSKAIAEEAYKHKMNLRIVDKNTITVAFDETTTIEDVDTLFKVFALGKPVTFTAASIAPEVQDAIPSGLVRETPYLTHPIFNMYHTEHELLRYISKLQSKDLSLCHSMIPLGSCTMKLNATTEMMPVTWPAFADIHPFAPTEQAQGYQEMFKNLGDLLCTITGFDSFSLQPNAGAAGEYAGLMVIQAYHMARGDHHRKVCIIPVSAHGTNPASAAMCGMKIITVGTDSKGNINIEELRKAAEANKENLSALMVTYPSTHGVYEEGIDEICKIIHDNGGQVYMDGANMNAQVGLTSPGWIGADVCHLNLHKTFCIPHGGGGPGMGPIGVKKHLAPYLPSHPVVPTGGIPAPEQSQPLGTIAAAPWGSALILPISYTYIAMMGSQGITNASKIAILNANYMAKRLENHYPILFRGVNGTVAHEFIVDLRPLKTTAGIEPEDVAKRLIDYGFHGPTMSWPVPGTLMIEPTESESKAELDRFCDALISIRQEIAEIEKGTVDFNNNVIKGAPHPPQLLMADKWTKPYSREYAAYPAPWLRAAKFWPTTCRVDNVYGDRNLICTLQPPQEYEEKAEATA.

The transit peptide at 1–63 (MERARRLAML…LNGFGSQVRT (63 aa)) directs the protein to the mitochondrion. Lys770 is modified (N6-(pyridoxal phosphate)lysine).

Belongs to the GcvP family. As to quaternary structure, homodimer. The glycine cleavage system is composed of four proteins: P, T, L and H. It depends on pyridoxal 5'-phosphate as a cofactor.

It is found in the mitochondrion. The enzyme catalyses N(6)-[(R)-lipoyl]-L-lysyl-[glycine-cleavage complex H protein] + glycine + H(+) = N(6)-[(R)-S(8)-aminomethyldihydrolipoyl]-L-lysyl-[glycine-cleavage complex H protein] + CO2. In terms of biological role, the glycine cleavage system catalyzes the degradation of glycine. The P protein binds the alpha-amino group of glycine through its pyridoxal phosphate cofactor; CO(2) is released and the remaining methylamine moiety is then transferred to the lipoamide cofactor of the H protein. This chain is Glycine dehydrogenase (decarboxylating), mitochondrial (GDCSPA), found in Flaveria trinervia (Clustered yellowtops).